A 494-amino-acid polypeptide reads, in one-letter code: Truncated non-functional calcium-binding mitochondrial carrier SAL1-1 (494 aa).

One can recognise an EF-hand 1 domain in the interval 11 to 46 (QRDIRYACLFKELDVKGNGQVTLDNLISAFEKNDHP). Residues lysine 65, aspartate 70, aspartate 93, aspartate 95, aspartate 97, lysine 99, and glutamate 104 each contribute to the Ca(2+) site. EF-hand domains lie at 80 to 115 (NAESQIWNGFQRIDLDHDGKIGINEINRYLSDLDNQ), 120 to 155 (NELNHELSNEKVNKFSRFFEWAFPKRKANIALRGQA), and 156 to 191 (SHKKNTDNDRSKKTTDSDLYVTYDQWRDFLLLVPRK). Ca(2+)-binding residues include threonine 161 and serine 166. Solcar repeat units lie at residues 225–332 (IRGF…TKKI) and 345–434 (LSKF…LKKM). The next 5 membrane-spanning stretches (helical) occupy residues 231-248 (FIAGGISGVISRTCTAPF), 307-326 (GNGLNVIKVFPESSIKFGSF), 355-368 (GLAGMAAQFSVYPI), 409-428 (RCHSRYSGHISLCCIRFGDF), and 458-475 (TSNGCIQWNCRSFCCLSN). A Solcar 3; truncated repeat occupies 452–494 (SKQPGCTSNGCIQWNCRSFCCLSNQSFKNKTTSPRNICTSLCV).

The protein belongs to the mitochondrial carrier (TC 2.A.29) family.

Its subcellular location is the mitochondrion inner membrane. In terms of biological role, calcium-dependent mitochondrial solute carrier. The protein is Truncated non-functional calcium-binding mitochondrial carrier SAL1-1 (SAL1) of Saccharomyces cerevisiae (strain ATCC 204508 / S288c) (Baker's yeast).